The chain runs to 476 residues: tRNA(Ile)-lysidine synthase (476 aa).

25 to 30 (SGGPDS) serves as a coordination point for ATP.

It belongs to the tRNA(Ile)-lysidine synthase family.

The protein localises to the cytoplasm. It carries out the reaction cytidine(34) in tRNA(Ile2) + L-lysine + ATP = lysidine(34) in tRNA(Ile2) + AMP + diphosphate + H(+). Its function is as follows. Ligates lysine onto the cytidine present at position 34 of the AUA codon-specific tRNA(Ile) that contains the anticodon CAU, in an ATP-dependent manner. Cytidine is converted to lysidine, thus changing the amino acid specificity of the tRNA from methionine to isoleucine. In Bacillus licheniformis (strain ATCC 14580 / DSM 13 / JCM 2505 / CCUG 7422 / NBRC 12200 / NCIMB 9375 / NCTC 10341 / NRRL NRS-1264 / Gibson 46), this protein is tRNA(Ile)-lysidine synthase.